The following is a 418-amino-acid chain: Cell division protein FtsA (418 aa).

This sequence belongs to the FtsA/MreB family. Self-interacts. Interacts with FtsZ.

Its subcellular location is the cell inner membrane. Functionally, cell division protein that is involved in the assembly of the Z ring. May serve as a membrane anchor for the Z ring. This Buchnera aphidicola subsp. Schizaphis graminum (strain Sg) protein is Cell division protein FtsA.